The following is a 308-amino-acid chain: Aldo-keto reductase AKR2E4 (308 aa).

Residues 22 to 29 (GTGRGTAK) and Asp-53 each bind NADP(+). Tyr-58 functions as the Proton donor in the catalytic mechanism. NADP(+)-binding positions include 158-159 (SN), Arg-215, and 259-269 (KSTNKQRIAQN).

It belongs to the short-chain dehydrogenases/reductases (SDR) family. In terms of tissue distribution, detected in hemolymph (at protein level). Detected in larval ovary.

Its activity is regulated as follows. Subject to substrate inhibition by high levels of 3-dehydroecdysone. NADP-dependent oxidoreductase with high 3-dehydroecdysone reductase activity. May play a role in the regulation of molting. Has lower activity with phenylglyoxal and isatin (in vitro). Has no activity with NADH as cosubstrate. Has no activity with nitrobenzaldehyde and 3-hydroxybenzaldehyde. This is Aldo-keto reductase AKR2E4 (akr2e) from Bombyx mori (Silk moth).